Reading from the N-terminus, the 600-residue chain is NAD-dependent malic enzyme, mitochondrial (600 aa).

Residues methionine 1–threonine 68 constitute a mitochondrion transit peptide. Arginine 93 is a fumarate binding site. Residue tyrosine 138 is the Proton donor of the active site. Arginine 194 is a (S)-malate binding site. Arginine 194 is an NAD(+) binding site. Lysine 212 functions as the Proton acceptor in the catalytic mechanism. Glutamate 283, aspartate 284, and aspartate 307 together coordinate a divalent metal cation. NAD(+)-binding residues include glycine 344 and alanine 347. Residues asparagine 458 and asparagine 502 each coordinate (S)-malate.

Belongs to the malic enzymes family. It depends on Mg(2+) as a cofactor. The cofactor is Mn(2+).

It localises to the mitochondrion matrix. Its subcellular location is the cytoplasm. The protein localises to the cytosol. The protein resides in the nucleus. The catalysed reaction is (S)-malate + NAD(+) = pyruvate + CO2 + NADH. The enzyme catalyses oxaloacetate + H(+) = pyruvate + CO2. NAD-dependent mitochondrial malic enzyme that catalyzes the oxidative decarboxylation of malate to pyruvate. In Cryptococcus neoformans var. grubii serotype A (strain H99 / ATCC 208821 / CBS 10515 / FGSC 9487) (Filobasidiella neoformans var. grubii), this protein is NAD-dependent malic enzyme, mitochondrial.